We begin with the raw amino-acid sequence, 102 residues long: NADH-quinone oxidoreductase subunit K (102 aa).

3 helical membrane-spanning segments follow: residues 5 to 25 (LSHY…GIFL), 31 to 51 (IVIL…MVAF), and 65 to 85 (LFIL…LVVF).

Belongs to the complex I subunit 4L family. NDH-1 is composed of 14 different subunits. Subunits NuoA, H, J, K, L, M, N constitute the membrane sector of the complex.

The protein localises to the cell inner membrane. It catalyses the reaction a quinone + NADH + 5 H(+)(in) = a quinol + NAD(+) + 4 H(+)(out). Functionally, NDH-1 shuttles electrons from NADH, via FMN and iron-sulfur (Fe-S) centers, to quinones in the respiratory chain. The immediate electron acceptor for the enzyme in this species is believed to be ubiquinone. Couples the redox reaction to proton translocation (for every two electrons transferred, four hydrogen ions are translocated across the cytoplasmic membrane), and thus conserves the redox energy in a proton gradient. The chain is NADH-quinone oxidoreductase subunit K from Rhizobium leguminosarum bv. trifolii (strain WSM2304).